Consider the following 601-residue polypeptide: Ubiquilin-4 (601 aa).

Residues 13 to 87 (IRVTVKTPKD…VHLVIKTPQK (75 aa)) form the Ubiquitin-like domain. Glycyl lysine isopeptide (Lys-Gly) (interchain with G-Cter in SUMO2) cross-links involve residues K23 and K62. Residues 87–155 (KAQDPAAATA…GAGEGSPSAT (69 aa)) are disordered. The segment covering 88–138 (AQDPAAATASSPSTPDPASAPSTTPASPATPAQPSTSGSASSDAGSGSRRS) has biased composition (low complexity). Phosphoserine is present on residues S98 and S144. Residues 139–149 (SGGGPSPGAGE) show a composition bias toward gly residues. STI1 domains are found at residues 192 to 229 (NPEMLSQIMENPLVQDMMSNPDLMRHMIMANPQMQQLM) and 230 to 261 (ERNPEISHMLNNPELMRQTMELARNPAMMQEM). A Phosphothreonine modification is found at T287. A disordered region spans residues 301–366 (FGNNPFSSLA…QVHPTVSNPF (66 aa)). The segment covering 307–318 (SSLAGNSDSSSS) has biased composition (low complexity). At S318 the chain carries Phosphoserine; by ATM. The span at 329 to 340 (LPNPWSPSPPTS) shows a compositional bias: pro residues. Over residues 344 to 354 (GSGGEGTGGSG) the composition is skewed to gly residues. Polar residues predominate over residues 357–366 (QVHPTVSNPF). STI1 domains follow at residues 393 to 440 (NPQL…QEQL) and 444 to 476 (LPVFLQQMQNPESLSILTNPRAMQALLQIQQGL). Residues 490-533 (LGSFGISRTPAPSAGSNAGSTPEAPTSSPATPATSSPTGASSAQ) are disordered. Residues 507 to 533 (AGSTPEAPTSSPATPATSSPTGASSAQ) show a composition bias toward low complexity. The region spanning 553 to 598 (QTPEVRFQQQLEQLNSMGFINREANLQALIATGGDINAAIERLLGS) is the UBA domain.

In terms of assembly, homooligomer. Binds signal sequences of proteins that are targeted to the endoplasmic reticulum. Interacts (via UBA domain) with GJA1 (not ubiquitinated) and with ubiquitin; both compete for the same binding site. Interacts (via UBA domain) with ubiquitin and with polyubiquitin chains. Interacts (via ubiquitin-like domain) with PSMD2 and PSMD4, regulatory subunits of the 26S proteasome. Interacts with ATXN1/SCA1; interaction with ATXN1 inhibits polyubiquitination of UBQLN4 and interferes with PSMD4 binding. Interacts with HERPUD1. Interacts (via ubiquitin-like domain) with UBQLN1 (via UBA domain). Interacts with UBQLN2. Interacts (via STI1 1 and 2 domains) with MAP1LC3A/B/C. Interacts with BAG6. Interacts with MRE11 (when ubiquitinated); interaction with ubiquitinated MRE11 leads to MRE11 removal from chromatin. Interacts with DESI1/POST; leading to nuclear export. Interacts with BCL2A1 and BCL2L10. (Microbial infection) Interacts with Mumps virus protein SH. In terms of processing, phosphorylated by ATM at Ser-318 in response to DNA damage, leading to localization in the nucleus and recruitment to sites of DNA damage. Ubiquitinated; this does not lead to proteasomal degradation. May undergo both 'Lys-48'- and 'Lys-63'-linked polyubiquitination. Highly expressed in pancreas, kidney, skeletal muscle, heart and throughout the brain, and at lower levels in placenta, lung and liver.

Its subcellular location is the nucleus. The protein localises to the cytoplasm. The protein resides in the chromosome. It is found in the endoplasmic reticulum. It localises to the perinuclear region. Its subcellular location is the cytoplasmic vesicle. The protein localises to the autophagosome. Functionally, regulator of protein degradation that mediates the proteasomal targeting of misfolded, mislocalized or accumulated proteins. Acts by binding polyubiquitin chains of target proteins via its UBA domain and by interacting with subunits of the proteasome via its ubiquitin-like domain. Key regulator of DNA repair that represses homologous recombination repair: in response to DNA damage, recruited to sites of DNA damage following phosphorylation by ATM and acts by binding and removing ubiquitinated MRE11 from damaged chromatin, leading to MRE11 degradation by the proteasome. MRE11 degradation prevents homologous recombination repair, redirecting double-strand break repair toward non-homologous end joining (NHEJ). Specifically recognizes and binds mislocalized transmembrane-containing proteins and targets them to proteasomal degradation. Collaborates with DESI1/POST in the export of ubiquitinated proteins from the nucleus to the cytoplasm. Also plays a role in the regulation of the proteasomal degradation of non-ubiquitinated GJA1. Acts as an adapter protein that recruits UBQLN1 to the autophagy machinery. Mediates the association of UBQLN1 with autophagosomes and the autophagy-related protein LC3 (MAP1LC3A/B/C) and may assist in the maturation of autophagosomes to autolysosomes by mediating autophagosome-lysosome fusion. This is Ubiquilin-4 from Homo sapiens (Human).